A 29-amino-acid chain; its full sequence is Trypsin inhibitor 1 (29 aa).

Disulfide bonds link Cys3–Cys20, Cys10–Cys22, and Cys16–Cys28.

It belongs to the protease inhibitor I7 (squash-type serine protease inhibitor) family.

The protein resides in the secreted. In terms of biological role, inhibits trypsin. The protein is Trypsin inhibitor 1 of Luffa aegyptiaca (Sponge gourd).